Here is a 37-residue protein sequence, read N- to C-terminus: MKVRASVKKICRNCKVIKRNGVVRVICSEPKHKQRQG.

The protein belongs to the bacterial ribosomal protein bL36 family.

This is Large ribosomal subunit protein bL36 from Vibrio atlanticus (strain LGP32) (Vibrio splendidus (strain Mel32)).